A 1549-amino-acid polypeptide reads, in one-letter code: MSLSFCGNNISSYNINDGVLQNSCFVDALNLVPHVFLLFITFPILFIGWGSQSSKVQIHHNTWLHFPGHNLRWILTFALLFVHVCEIAEGIVSDSRRESRHLHLFMPAVMGFVATTTSIVYYHNIETSNFPKLLLALFLYWVMAFITKTIKLVKYCQSGLDISNLRFCITGMMVILNGLLMAVEINVIRVRRYVFFMNPQKVKPPEDLQDLGVRFLQPFVNLLSKATYWWMNTLIISAHKKPIDLKAIGKLPIAMRAVTNYVCLKDAYEEQKKKVADHPNRTPSIWLAMYRAFGRPILLSSTFRYLADLLGFAGPLCISGIVQRVNETQNGTNNTTGISETLSSKEFLENAYVLAVLLFLALILQRTFLQASYYVTIETGINLRGALLAMIYNKILRLSTSNLSMGEMTLGQINNLVAIETNQLMWFLFLCPNLWAMPVQIIMGVILLYNLLGSSALVGAAVIVLLAPIQYFIATKLAEAQKSTLDYSTERLKKTNEILKGIKLLKLYAWEHIFCKSVEETRMKELSSLKTFALYTSLSIFMNAAIPIAAVLATFVTHAYASGNNLKPAEAFASLSLFHILVTPLFLLSTVVRFAVKAIISVQKLNEFLLSDEIGDDSWRTGESSLPFESCKKHTGVQPKTINRKQPGRYHLDSYEQSTRRLRPAETEDIAIKVTNGYFSWGSGLATLSNIDIRIPTGQLTMIVGQVGCGKSSLLLAILGEMQTLEGKVHWSNVNESEPSFEATRSRNRYSVAYAAQKPWLLNATVEENITFGSPFNKQRYKAVTDACSLQPDIDLLPFGDQTEIGERGINLSGGQRQRICVARALYQNTNIVFLDDPFSALDIHLSDHLMQEGILKFLQDDKRTLVLVTHKLQYLTHADWIIAMKDGSVLREGTLKDIQTKDVELYEHWKTLMNRQDQELEKDMEADQTTLERKTLRRAMYSREAKAQMEDEDEEEEEEEDEDDNMSTVMRLRTKMPWKTCWRYLTSGGFFLLILMIFSKLLKHSVIVAIDYWLATWTSEYSINNTGKADQTYYVAGFSILCGAGIFLCLVTSLTVEWMGLTAAKNLHHNLLNKIILGPIRFFDTTPLGLILNRFSADTNIIDQHIPPTLESLTRSTLLCLSAIGMISYATPVFLVALLPLGVAFYFIQKYFRVASKDLQELDDSTQLPLLCHFSETAEGLTTIRAFRHETRFKQRMLELTDTNNIAYLFLSAANRWLEVRTDYLGACIVLTASIASISGSSNSGLVGLGLLYALTITNYLNWVVRNLADLEVQMGAVKKVNSFLTMESENYEGTMDPSQVPEHWPQEGEIKIHDLCVRYENNLKPVLKHVKAYIKPGQKVGICGRTGSGKSSLSLAFFRMVDIFDGKIVIDGIDISKLPLHTLRSRLSIILQDPILFSGSIRFNLDPECKCTDDRLWEALEIAQLKNMVKSLPGGLDAVVTEGGENFSVGQRQLFCLARAFVRKSSILIMDEATASIDMATENILQKVVMTAFADRTVVTIAHRVSSIMDAGLVLVFSEGILVECDTVPNLLAHKNGLFSTLVMTNK.

Residues 1 to 30 (MSLSFCGNNISSYNINDGVLQNSCFVDALN) lie on the Extracellular side of the membrane. N-linked (GlcNAc...) asparagine glycosylation is present at asparagine 9. Residues 31-51 (LVPHVFLLFITFPILFIGWGS) traverse the membrane as a helical segment. The Cytoplasmic portion of the chain corresponds to 52–72 (QSSKVQIHHNTWLHFPGHNLR). The helical transmembrane segment at 73–93 (WILTFALLFVHVCEIAEGIVS) threads the bilayer. Over 94–101 (DSRRESRH) the chain is Extracellular. A helical transmembrane segment spans residues 102–122 (LHLFMPAVMGFVATTTSIVYY). Topologically, residues 123 to 132 (HNIETSNFPK) are cytoplasmic. Residues 133-153 (LLLALFLYWVMAFITKTIKLV) traverse the membrane as a helical segment. The Extracellular portion of the chain corresponds to 154 to 167 (KYCQSGLDISNLRF). A helical membrane pass occupies residues 168–188 (CITGMMVILNGLLMAVEINVI). Residues 189 to 301 (RVRRYVFFMN…AFGRPILLSS (113 aa)) lie on the Cytoplasmic side of the membrane. The 301-residue stretch at 297–597 (ILLSSTFRYL…LSTVVRFAVK (301 aa)) folds into the ABC transmembrane type-1 1 domain. The chain crosses the membrane as a helical span at residues 302–322 (TFRYLADLLGFAGPLCISGIV). The Extracellular segment spans residues 323-350 (QRVNETQNGTNNTTGISETLSSKEFLEN). N-linked (GlcNAc...) asparagine glycans are attached at residues asparagine 326, asparagine 330, asparagine 333, and asparagine 334. Residues 351–371 (AYVLAVLLFLALILQRTFLQA) traverse the membrane as a helical segment. Over 372-423 (SYYVTIETGINLRGALLAMIYNKILRLSTSNLSMGEMTLGQINNLVAIETNQ) the chain is Cytoplasmic. Residues 424–444 (LMWFLFLCPNLWAMPVQIIMG) form a helical membrane-spanning segment. Over 445 to 455 (VILLYNLLGSS) the chain is Extracellular. The chain crosses the membrane as a helical span at residues 456–476 (ALVGAAVIVLLAPIQYFIATK). At 477–531 (LAEAQKSTLDYSTERLKKTNEILKGIKLLKLYAWEHIFCKSVEETRMKELSSLKT) the chain is on the cytoplasmic side. The chain crosses the membrane as a helical span at residues 532-552 (FALYTSLSIFMNAAIPIAAVL). The Extracellular portion of the chain corresponds to 553 to 571 (ATFVTHAYASGNNLKPAEA). A helical transmembrane segment spans residues 572–592 (FASLSLFHILVTPLFLLSTVV). Residues 593–990 (RFAVKAIISV…TCWRYLTSGG (398 aa)) lie on the Cytoplasmic side of the membrane. The ABC transporter 1 domain maps to 672–912 (IKVTNGYFSW…DVELYEHWKT (241 aa)). 705 to 712 (GQVGCGKS) lines the ATP pocket. The interval 944-967 (REAKAQMEDEDEEEEEEEDEDDNM) is disordered. The segment covering 951–966 (EDEDEEEEEEEDEDDN) has biased composition (acidic residues). A helical membrane pass occupies residues 991–1011 (FFLLILMIFSKLLKHSVIVAI). Residues 994–1274 (LILMIFSKLL…VVRNLADLEV (281 aa)) form the ABC transmembrane type-1 2 domain. Topologically, residues 1012-1034 (DYWLATWTSEYSINNTGKADQTY) are extracellular. The helical transmembrane segment at 1035–1055 (YVAGFSILCGAGIFLCLVTSL) threads the bilayer. At 1056-1127 (TVEWMGLTAA…TLLCLSAIGM (72 aa)) the chain is on the cytoplasmic side. Residues 1128 to 1148 (ISYATPVFLVALLPLGVAFYF) form a helical membrane-spanning segment. At 1149-1245 (IQKYFRVASK…IASISGSSNS (97 aa)) the chain is on the extracellular side. A helical transmembrane segment spans residues 1246-1266 (GLVGLGLLYALTITNYLNWVV). The Cytoplasmic portion of the chain corresponds to 1267–1549 (RNLADLEVQM…LFSTLVMTNK (283 aa)). Residues 1312 to 1546 (IKIHDLCVRY…KNGLFSTLVM (235 aa)) form the ABC transporter 2 domain. ATP is bound at residue 1346–1353 (GRTGSGKS).

This sequence belongs to the ABC transporter superfamily. ABCC family. Conjugate transporter (TC 3.A.1.208) subfamily. In terms of assembly, interacts with KCNJ11. Interacts with KCNJ8.

The protein localises to the membrane. Subunit of ATP-sensitive potassium channels (KATP). Can form cardiac and smooth muscle-type KATP channels with KCNJ11. KCNJ11 forms the channel pore while ABCC9 is required for activation and regulation. Can form a sulfonylurea-sensitive but ATP-insensitive potassium channel with KCNJ8. The chain is ATP-binding cassette sub-family C member 9 (ABCC9) from Homo sapiens (Human).